A 163-amino-acid chain; its full sequence is Nucleotide-binding protein KPK_4305 (163 aa).

The protein belongs to the YajQ family.

Nucleotide-binding protein. The chain is Nucleotide-binding protein KPK_4305 from Klebsiella pneumoniae (strain 342).